A 464-amino-acid polypeptide reads, in one-letter code: Protein FAM90A18 (464 aa).

3 disordered regions span residues 1–42 (MMAR…DPRL), 70–387 (PATL…ASHD), and 415–437 (HSPE…SEAP). 2 stretches are compositionally biased toward basic and acidic residues: residues 74-89 (GKKE…KPRV) and 97-114 (NKDK…DPQR). Low complexity predominate over residues 180-197 (LASLSPLRKASLSSSSSL).

It belongs to the FAM90 family.

The sequence is that of Protein FAM90A18 from Homo sapiens (Human).